A 37-amino-acid chain; its full sequence is Large ribosomal subunit protein bL36 (37 aa).

The protein belongs to the bacterial ribosomal protein bL36 family.

This is Large ribosomal subunit protein bL36 from Aliarcobacter butzleri (strain RM4018) (Arcobacter butzleri).